The chain runs to 201 residues: Peptide deformylase (201 aa).

Residues Cys121 and His163 each coordinate Fe cation. The active site involves Glu164. His167 lines the Fe cation pocket.

Belongs to the polypeptide deformylase family. Fe(2+) is required as a cofactor.

The enzyme catalyses N-terminal N-formyl-L-methionyl-[peptide] + H2O = N-terminal L-methionyl-[peptide] + formate. Functionally, removes the formyl group from the N-terminal Met of newly synthesized proteins. Requires at least a dipeptide for an efficient rate of reaction. N-terminal L-methionine is a prerequisite for activity but the enzyme has broad specificity at other positions. This Parasynechococcus marenigrum (strain WH8102) protein is Peptide deformylase.